The primary structure comprises 131 residues: Small ribosomal subunit protein uS8 (131 aa).

The protein belongs to the universal ribosomal protein uS8 family. As to quaternary structure, part of the 30S ribosomal subunit. Contacts proteins S5 and S12.

In terms of biological role, one of the primary rRNA binding proteins, it binds directly to 16S rRNA central domain where it helps coordinate assembly of the platform of the 30S subunit. The sequence is that of Small ribosomal subunit protein uS8 from Parabacteroides distasonis (strain ATCC 8503 / DSM 20701 / CIP 104284 / JCM 5825 / NCTC 11152).